Here is a 167-residue protein sequence, read N- to C-terminus: NADH-ubiquinone oxidoreductase chain 6 (167 aa).

Transmembrane regions (helical) follow at residues 5 to 25 (IIMLSKIFMSSLISMILTIYL), 34 to 54 (MLLIYLISYSIYMSLMMFTMC), 60 to 80 (LILMILIVFLSGMLIMFSYFI), and 138 to 158 (FFIMILMLIITLILMTKITYI).

Belongs to the complex I subunit 6 family.

The protein localises to the mitochondrion membrane. The catalysed reaction is a ubiquinone + NADH + 5 H(+)(in) = a ubiquinol + NAD(+) + 4 H(+)(out). Functionally, core subunit of the mitochondrial membrane respiratory chain NADH dehydrogenase (Complex I) that is believed to belong to the minimal assembly required for catalysis. Complex I functions in the transfer of electrons from NADH to the respiratory chain. The immediate electron acceptor for the enzyme is believed to be ubiquinone. The chain is NADH-ubiquinone oxidoreductase chain 6 (ND6) from Apis mellifera ligustica (Common honeybee).